Reading from the N-terminus, the 136-residue chain is DNA-binding protein H-NS (136 aa).

A coiled-coil region spans residues threonine 13–alanine 67. Residues glutamine 113–alanine 118 mediate DNA binding.

The protein belongs to the histone-like protein H-NS family. In terms of assembly, interacts with YmoA in the absence of DNA. Homodimer that oligomerizes on DNA into higher-order complexes that form bridges between disparate regions of DNA compacting it. Interacts with YmoA.

The protein localises to the cytoplasm. It is found in the nucleoid. Functionally, a DNA-binding protein implicated in transcriptional repression and chromosome organization and compaction. Binds nucleation sites in AT-rich DNA and bridges them, forming higher-order nucleoprotein complexes and condensing the chromosome. As many horizontally transferred genes are AT-rich, it plays a central role in silencing foreign genes. A subset of genes are repressed by H-NS in association with YmoA. Complements a number of hns deficiencies in E.coli; represses the bgl operon, represses hemolysin expression. This chain is DNA-binding protein H-NS, found in Yersinia enterocolitica.